Reading from the N-terminus, the 343-residue chain is Polyprenal reductase 2 (343 aa).

6 helical membrane passes run 12–32, 66–86, 164–184, 223–243, 266–286, and 291–311; these read GAWITVWIVSILPLVIASIPT, FAHFYVIGVVWTTLLLAATWM, MHILGYFAGLFFYVTAPLSLC, PLMKLGSLQWIGGAIFLWGWI, IIPYGDWFGMVSSPHFLAEIV, and LLIASGGTDITIWLLFGFVAA.

This sequence belongs to the steroid 5-alpha reductase family. Polyprenal reductase subfamily. In terms of tissue distribution, expressed in roots, leaves, stems and flowers.

Its subcellular location is the endoplasmic reticulum membrane. The enzyme catalyses a di-trans,poly-cis-dolichal + NADP(+) = a di-trans,poly-cis-polyprenal + NADPH + H(+). It participates in protein modification; protein glycosylation. In terms of biological role, plays a key role in early steps of protein N-linked glycosylation by being involved in the conversion of polyprenol into dolichol. Acts as a polyprenal reductase that mediates the reduction of polyprenal into dolichal in a NADP-dependent mechanism. Dolichols are required for the synthesis of dolichol-linked monosaccharides and the oligosaccharide precursor used for N-glycosylation. Involved in the regulation of plant growth and reproductive processes. This is Polyprenal reductase 2 from Arabidopsis thaliana (Mouse-ear cress).